A 90-amino-acid chain; its full sequence is DNA-directed RNA polymerase subunit Rpo11 (90 aa).

The protein belongs to the archaeal Rpo11/eukaryotic RPB11/RPC19 RNA polymerase subunit family. Part of the 13-subunit RNA polymerase complex.

Its subcellular location is the cytoplasm. It catalyses the reaction RNA(n) + a ribonucleoside 5'-triphosphate = RNA(n+1) + diphosphate. Functionally, DNA-dependent RNA polymerase (RNAP) catalyzes the transcription of DNA into RNA using the four ribonucleoside triphosphates as substrates. The polypeptide is DNA-directed RNA polymerase subunit Rpo11 (Sulfolobus acidocaldarius (strain ATCC 33909 / DSM 639 / JCM 8929 / NBRC 15157 / NCIMB 11770)).